The chain runs to 699 residues: Polyribonucleotide nucleotidyltransferase (699 aa).

Mg(2+) is bound by residues Asp485 and Asp491. The region spanning 552-611 (PRITTIKINPEKIRDVIGKGGAVIRALTEETGTTIELEDDGTVKIASSNGEATKEAIRRI) is the KH domain. The S1 motif domain occupies 621–689 (GRIYNGKVIR…RQGRVRLSIK (69 aa)).

This sequence belongs to the polyribonucleotide nucleotidyltransferase family. In terms of assembly, component of the RNA degradosome, which is a multiprotein complex involved in RNA processing and mRNA degradation. Requires Mg(2+) as cofactor.

It localises to the cytoplasm. The catalysed reaction is RNA(n+1) + phosphate = RNA(n) + a ribonucleoside 5'-diphosphate. Functionally, involved in mRNA degradation. Catalyzes the phosphorolysis of single-stranded polyribonucleotides processively in the 3'- to 5'-direction. The protein is Polyribonucleotide nucleotidyltransferase of Shewanella sp. (strain MR-7).